The following is a 72-amino-acid chain: MAKEEQIELEGVIVDTLPNTMFRVKLDNGHVITAHISGKMRKFYIRILTGDRVKVEMSPYDLTKGRITFRMK.

The 72-residue stretch at 1–72 (MAKEEQIELE…TKGRITFRMK (72 aa)) folds into the S1-like domain.

Belongs to the IF-1 family. As to quaternary structure, component of the 30S ribosomal translation pre-initiation complex which assembles on the 30S ribosome in the order IF-2 and IF-3, IF-1 and N-formylmethionyl-tRNA(fMet); mRNA recruitment can occur at any time during PIC assembly.

It localises to the cytoplasm. One of the essential components for the initiation of protein synthesis. Stabilizes the binding of IF-2 and IF-3 on the 30S subunit to which N-formylmethionyl-tRNA(fMet) subsequently binds. Helps modulate mRNA selection, yielding the 30S pre-initiation complex (PIC). Upon addition of the 50S ribosomal subunit IF-1, IF-2 and IF-3 are released leaving the mature 70S translation initiation complex. The chain is Translation initiation factor IF-1 from Alcanivorax borkumensis (strain ATCC 700651 / DSM 11573 / NCIMB 13689 / SK2).